The following is a 659-amino-acid chain: Cysteine-rich receptor-like protein kinase 5 (659 aa).

The first 24 residues, 1 to 24 (MSAYTSLNFLFLLTFFIGSLRVSA), serve as a signal peptide directing secretion. At 25 to 279 (QLQDPTYVGH…FPPGKGKNST (255 aa)) the chain is on the extracellular side. 2 consecutive Gnk2-homologous domains span residues 28–132 (DPTY…DRNI) and 138–243 (TTTT…VYPF). N-linked (GlcNAc...) asparagine glycans are attached at residues N175 and N277. A helical membrane pass occupies residues 280–300 (VIIIAIVVPVAISVLICVAVF). Residues 301-659 (SFHASKRAKK…AASITILAPR (359 aa)) are Cytoplasmic-facing. Residues 340-619 (FSMCNKLGQG…QMLTTSSIAL (280 aa)) enclose the Protein kinase domain. Residues 346 to 354 (LGQGGFGQV) and K368 contribute to the ATP site. Y413 carries the post-translational modification Phosphotyrosine. D465 serves as the catalytic Proton acceptor. Position 505 is a phosphothreonine (T505). Y513 carries the phosphotyrosine modification.

It belongs to the protein kinase superfamily. Ser/Thr protein kinase family. CRK subfamily. Interacts with CRKIP1 (KAPP), CRKIP2 and CRKIP3, three kinase-associated type 2C proteins.

It is found in the membrane. The enzyme catalyses L-seryl-[protein] + ATP = O-phospho-L-seryl-[protein] + ADP + H(+). It catalyses the reaction L-threonyl-[protein] + ATP = O-phospho-L-threonyl-[protein] + ADP + H(+). In terms of biological role, involved in multiple distinct defense responses. May function as a disease resistance (R) protein. This is Cysteine-rich receptor-like protein kinase 5 (CRK5) from Arabidopsis thaliana (Mouse-ear cress).